A 391-amino-acid chain; its full sequence is UPF0229 protein CA_C0580 (391 aa).

2 disordered regions span residues 1-20 (MAIF…TIGD) and 75-109 (VGSG…NSEG). Over residues 96-106 (GSKGKGKGAGN) the composition is skewed to gly residues.

This sequence belongs to the UPF0229 family.

This chain is UPF0229 protein CA_C0580, found in Clostridium acetobutylicum (strain ATCC 824 / DSM 792 / JCM 1419 / IAM 19013 / LMG 5710 / NBRC 13948 / NRRL B-527 / VKM B-1787 / 2291 / W).